The sequence spans 1671 residues: AF4/FMR2 family member lilli (1671 aa).

6 disordered regions span residues 53 to 79 (YSQNYNMEEYERRKRREREKIERQQGI), 126 to 304 (SAPG…EKDV), 393 to 599 (LAGE…SNKW), 723 to 761 (DSGTSASGSSSSSSSSSDSAVGGEVVPMPGPGETFQLPG), 774 to 1162 (PTQS…TTPH), and 1185 to 1311 (KLTP…LQIG). The segment covering 70–79 (REKIERQQGI) has biased composition (basic and acidic residues). 2 stretches are compositionally biased toward low complexity: residues 145–179 (SLGHSPSSASSAAGPTSASATTALPGQQQHYQQQQ) and 210–242 (PSSSGMAPPRGPPRSSSSNSNSSSATNNASSGG). The residue at position 416 (Thr-416) is a Phosphothreonine. Over residues 424–437 (LKTEKNHSLEKQDS) the composition is skewed to basic and acidic residues. The span at 439–450 (LENDLELSESED) shows a compositional bias: acidic residues. Residues Ser-446 and Ser-448 each carry the phosphoserine modification. A compositionally biased stretch (low complexity) spans 459–479 (SAGNSSNSSESDSSESGSESS). The segment covering 487–496 (HPNHQQHHHQ) has biased composition (basic residues). Composition is skewed to low complexity over residues 497 to 522 (LQQQQQASMQQQQVLQQQQQHRPQPL) and 561 to 587 (PAGVNSSAVMGAGSVSGGTLSSGGSSS). Over residues 588 to 599 (NKTPSPTESNKW) the composition is skewed to polar residues. The segment covering 723–755 (DSGTSASGSSSSSSSSSDSAVGGEVVPMPGPGE) has biased composition (low complexity). The span at 774-786 (PTQSQKAPPSNSV) shows a compositional bias: polar residues. Over residues 800 to 810 (QRQKKPRKKKA) the composition is skewed to basic residues. Ser-819 and Ser-820 each carry phosphoserine. Residues 849–861 (KKGRGRPRKQQQS) constitute a DNA-binding region (a.T hook). Over residues 858-896 (QQQSGGSGNLSSASAGSSSQTKGPTLTAAKKPLAKTPLA) the composition is skewed to low complexity. A phosphoserine mark is found at Ser-869 and Ser-871. Residues 907–917 (SQSSSNGNTPT) are compositionally biased toward polar residues. 2 stretches are compositionally biased toward low complexity: residues 947 to 963 (SSSAESSSKSSSSSSSS) and 988 to 1002 (ALLGSGSSSASSSGS). A compositionally biased stretch (polar residues) spans 1009-1020 (SRSQVGSGQALA). Over residues 1032–1058 (SQHSQHLSSSECSSSSGGCTAVCSSSS) the composition is skewed to low complexity. The span at 1063–1080 (EGRREKERERKPKSDKNK) shows a compositional bias: basic and acidic residues. A compositionally biased stretch (pro residues) spans 1120 to 1130 (QPPPPHAPPAA). The span at 1188–1203 (PAQQNGHLTPKDQATN) shows a compositional bias: polar residues. Basic and acidic residues-rich tracts occupy residues 1224-1241 (EHPVKPEPELDAGYEAKF) and 1250-1280 (FQLKQERDRDRERERERERERERDREREQPP). Ser-1360 bears the Phosphoserine mark. Thr-1362 carries the phosphothreonine modification. Positions 1562-1581 (NTPSSISPSNSVGSQGSGSN) are enriched in low complexity. Residues 1562–1586 (NTPSSISPSNSVGSQGSGSNTPPGR) form a disordered region.

Belongs to the AF4 family.

Its subcellular location is the nucleus. In terms of biological role, has a role in transcriptional regulation. Acts in parallel with the Ras/MAPK and the PI3K/PKB pathways in the control of cell identity and cellular growth. Essential for regulation of the cytoskeleton and cell growth but not for cell proliferation or growth rate. Required specifically for the microtubule-based basal transport of lipid droplets. Plays a partially redundant function downstream of Raf in cell fate specification in the developing eye. Pair-rule protein that regulates embryonic cellularization, gastrulation and segmentation. This chain is AF4/FMR2 family member lilli, found in Drosophila yakuba (Fruit fly).